The primary structure comprises 567 residues: Urease subunit alpha (567 aa).

In terms of domain architecture, Urease spans 129–567; that stretch reads GGIDAHIHFI…LPLTQRYCLF (439 aa). Residues histidine 134, histidine 136, and lysine 217 each coordinate Ni(2+). Residue lysine 217 is modified to N6-carboxylysine. Histidine 219 contributes to the substrate binding site. 2 residues coordinate Ni(2+): histidine 246 and histidine 272. The active-site Proton donor is histidine 320. Aspartate 360 lines the Ni(2+) pocket.

The protein belongs to the metallo-dependent hydrolases superfamily. Urease alpha subunit family. In terms of assembly, heterotrimer of UreA (gamma), UreB (beta) and UreC (alpha) subunits. Three heterotrimers associate to form the active enzyme. Ni cation serves as cofactor. Post-translationally, carboxylation allows a single lysine to coordinate two nickel ions.

It is found in the cytoplasm. It carries out the reaction urea + 2 H2O + H(+) = hydrogencarbonate + 2 NH4(+). It functions in the pathway nitrogen metabolism; urea degradation; CO(2) and NH(3) from urea (urease route): step 1/1. The polypeptide is Urease subunit alpha (Psychromonas ingrahamii (strain DSM 17664 / CCUG 51855 / 37)).